The chain runs to 331 residues: Fructose-1,6-bisphosphatase class 1 2 (331 aa).

The Mg(2+) site is built by Glu-80, Asp-98, Leu-100, and Asp-101. Residues Asp-101 to Ser-104 and Asn-189 contribute to the substrate site. Position 261 (Glu-261) interacts with Mg(2+).

It belongs to the FBPase class 1 family. Homotetramer. It depends on Mg(2+) as a cofactor.

The protein localises to the cytoplasm. The catalysed reaction is beta-D-fructose 1,6-bisphosphate + H2O = beta-D-fructose 6-phosphate + phosphate. The protein operates within carbohydrate biosynthesis; Calvin cycle. The protein is Fructose-1,6-bisphosphatase class 1 2 of Cereibacter sphaeroides (strain ATCC 17029 / ATH 2.4.9) (Rhodobacter sphaeroides).